Consider the following 192-residue polypeptide: ADP-ribosylation factor-like protein 14 (192 aa).

The N-myristoyl glycine moiety is linked to residue glycine 2. GTP contacts are provided by residues 20–27, 64–68, and 124–127; these read GLDSAGKS, DVGGQ, and NKQD.

The protein belongs to the small GTPase superfamily. Arf family. As to quaternary structure, interacts with ARL14EP.

It localises to the cytoplasmic vesicle. GTPase that recruits MYO1E to MHC class II-containing vesicles via the effector protein ARL14EP and hence controls the movement of these vesicles along the actin cytoskeleton in dendritic cells. The sequence is that of ADP-ribosylation factor-like protein 14 (Arl14) from Mus musculus (Mouse).